Here is a 1446-residue protein sequence, read N- to C-terminus: Receptor-type tyrosine-protein phosphatase U (1446 aa).

The signal sequence occupies residues 1–18 (MARAQALVLALTFQFCAP). The Extracellular segment spans residues 19 to 749 (ETETPAAGCT…QRSEEMGLIL (731 aa)). The 164-residue stretch at 25–188 (AGCTFEEASD…ILLFSYPCAK (164 aa)) folds into the MAM domain. Residue Asn75 is glycosylated (N-linked (GlcNAc...) asparagine). Residues 190–275 (PHFSRLGDVE…SQAPRGAGVS (86 aa)) form the Ig-like C2-type domain. A disulfide bridge links Cys210 with Cys264. Fibronectin type-III domains lie at 288-383 (PIAP…CAEP), 386-484 (APKG…TDED), 485-591 (VPGG…SAPS), and 592-668 (FDYA…FGAE). Asn410 carries an N-linked (GlcNAc...) asparagine glycan. N-linked (GlcNAc...) asparagine glycosylation is present at Asn685. A helical transmembrane segment spans residues 750–770 (GICAGGLAVLILLLGAIIVII). Positions 771–887 (RKGRDRYAYS…DLLQHINQMK (117 aa)) are mediates interaction with CTNNB1. Residues 771–1446 (RKGRDRYAYS…LEYLEALELR (676 aa)) are Cytoplasmic-facing. The interval 830–867 (PGYSPRGDQRSGGVTEASSLLGGSPRRPCGRKGSPYHT) is disordered. A phosphoserine mark is found at Ser848, Ser853, and Ser863. Tyr865 bears the Phosphotyrosine mark. 2 consecutive Tyrosine-protein phosphatase domains span residues 888 to 1144 (TAEG…ILEA) and 1176 to 1439 (LREE…ALEY). Substrate contacts are provided by residues Glu1053, 1085–1091 (CSAGTGR), and Gln1129. The active-site Phosphocysteine intermediate is the Cys1085. Cys1380 serves as the catalytic Phosphocysteine intermediate.

It belongs to the protein-tyrosine phosphatase family. Receptor class 2B subfamily. As to quaternary structure, forms homooligomeric complexes which mediate cell homotypic adhesion. Interacts (via the cytoplasmic juxtamembrane domain) with CTNNB1; may mediate interaction with the cadherin/catenin adhesion complex. Interacts with KIT. May interact with AP3B1. In terms of processing, the extracellular domain is proteolytically processed through cleavage within the fibronectin type-III 4 domain. In addition to the 190 kDa full-length protein, proteolytic products of 100 kDa, 80 kDa and 73 kDa are observed. N-glycosylated. Post-translationally, phosphorylated on tyrosine residues upon activation of KIT with stem cell factor (SCF). The 73 kDa proteolytic product is not phosphorylated. Transcripts of different sizes are differentially expressed in a subset of tissues. Detected in brain, lung, skeletal muscle, heart, kidney and placenta. In brain; expressed in olfactory bulb, cerebral cortex, hippocampus and cerebellum.

The protein resides in the cell junction. It localises to the cell membrane. It carries out the reaction O-phospho-L-tyrosyl-[protein] + H2O = L-tyrosyl-[protein] + phosphate. Functionally, tyrosine-protein phosphatase which dephosphorylates CTNNB1. Regulates CTNNB1 function both in cell adhesion and signaling. May function in cell proliferation and migration and play a role in the maintenance of epithelial integrity. May play a role in megakaryocytopoiesis. This Mus musculus (Mouse) protein is Receptor-type tyrosine-protein phosphatase U (Ptpru).